The sequence spans 235 residues: Zorya protein ZorB (235 aa).

Residues Leu25–Val44 traverse the membrane as a helical segment. In terms of domain architecture, OmpA-like spans Gln87–Ala225.

Belongs to the MotB family.

It is found in the cell inner membrane. Component of antiviral defense system Zorya type II, composed of ZorA, ZorB and ZorE. Expression of Zorya type II in E.coli (strain MG1655) confers resistance to phages SECphi7 and T7. While most T7 infected Zorya-containing cells undergo abortive infection, a minority produce viable phage progeny. These eventually accumulate to a high multiplicity of infection, leading to culture collapse by 170 minutes after initial infection. ZorA and ZorB probably assemble in the cell inner membrane and exert their effect there. This is Zorya protein ZorB from Escherichia coli (strain ATCC 8739 / DSM 1576 / NBRC 3972 / NCIMB 8545 / WDCM 00012 / Crooks).